The primary structure comprises 74 residues: Lantibiotic lichenicidin A1 (74 aa).

The propeptide occupies 1–42 (MSKKEMILSWKNPMYRTESSYHPAGNILKELQEEEQHSIAGG). T43 is subject to 2-oxobutanoic acid. The beta-methyllanthionine (Thr-Cys) cross-link spans 45-49 (TLSTC). S47 bears the 2,3-didehydroalanine (Ser) mark. T48 is modified ((Z)-2,3-didehydrobutyrine). The lanthionine (Ser-Cys) cross-link spans 53-63 (SKPLGNNGYLC). 2 cross-links (beta-methyllanthionine (Thr-Cys)) span residues 64–69 (TVTKEC) and 66–73 (TKECMPSC).

Post-translationally, maturation of lantibiotics involves the enzymatic conversion of Thr, and Ser into dehydrated AA and the formation of thioether bonds with cysteine. This is followed by membrane translocation and cleavage of the modified precursor.

Its subcellular location is the secreted. The protein localises to the cell wall. Its function is as follows. Lanthionine-containing peptide antibiotic (lantibiotic) active on Gram-positive bacteria. The bactericidal activity of lantibiotics is based on depolarization of energized bacterial cytoplasmic membranes, initiated by the formation of aqueous transmembrane pores. When present individually, LchA1 exhibits activity towards L.lactis HP. When combined with LchA2, it displays activity towards a broad spectrum of non-pathogenic and pathogenic Gram-positive bacteria including strains of L.monocytogenes, methicillin-resistant S.aureus, S.pneumoniae and strains of vancomycin-resistant enterococci, but not towards E.faecium L4001 and BM4147-1. Combined LchA1 and LchA2 peptides also inhibit Bacillus sp. HIL-Y85/54728, L.lactis DPC3417 and B.halodurans C-125, which produce lantibiotics themselves. Inactivated by proteinase K and pronase E, but not by trypsin and chymotrypsin. The sequence is that of Lantibiotic lichenicidin A1 from Bacillus licheniformis (strain ATCC 14580 / DSM 13 / JCM 2505 / CCUG 7422 / NBRC 12200 / NCIMB 9375 / NCTC 10341 / NRRL NRS-1264 / Gibson 46).